The chain runs to 1902 residues: PI-type proteinase (1902 aa).

An N-terminal signal peptide occupies residues 1 to 33 (MQRKKKGLSILLAGTVALGALAVLPVGEIQAKA). A propeptide spanning residues 34-187 (AISQQTKGSS…VTLAKVYYPT (154 aa)) is cleaved from the precursor. Residues 191–697 (ANSMANVQAV…AGLVDVKAAI (507 aa)) enclose the Peptidase S8 domain. Residues D217, H281, and S620 each act as charge relay system in the active site. Residues 1796 to 1874 (GKGDGTTGTS…GALPKTGETT (79 aa)) are disordered. The segment covering 1797–1812 (KGDGTTGTSDKGGGQG) has biased composition (gly residues). Over residues 1830–1843 (SQPSSGGNIPTNPA) the composition is skewed to polar residues. Positions 1867-1871 (LPKTG) match the LPXTG sorting signal motif. T1870 is modified (pentaglycyl murein peptidoglycan amidated threonine). Positions 1871–1902 (GETTERPAFGFLGVIVVILMGVLGLKRKQREE) are cleaved as a propeptide — removed by sortase.

Belongs to the peptidase S8 family.

It localises to the secreted. Its subcellular location is the cell wall. It catalyses the reaction Endopeptidase activity with very broad specificity, although some subsite preference have been noted, e.g. large hydrophobic residues in the P1 and P4 positions, and Pro in the P2 position. Best known for its action on caseins, although it has been shown to hydrolyze hemoglobin and oxidized insulin B-chain.. Functionally, protease which breaks down milk proteins during the growth of the bacteria on milk. This chain is PI-type proteinase (prtP), found in Lactococcus lactis subsp. cremoris (Streptococcus cremoris).